A 438-amino-acid chain; its full sequence is DEAD-box ATP-dependent RNA helicase CshB (438 aa).

A Q motif motif is present at residues Thr-4 to Lys-32. The Helicase ATP-binding domain maps to Ile-35–Ala-208. Ser-48–Thr-55 contributes to the ATP binding site. The short motif at Asp-156–Asp-159 is the DEAD box element. The region spanning Leu-235–Arg-385 is the Helicase C-terminal domain. Residues Gly-380–Lys-438 form a disordered region. Residues Thr-392 to His-401 show a composition bias toward basic and acidic residues. 2 stretches are compositionally biased toward basic residues: residues Arg-402 to Lys-417 and Ile-425 to Lys-438.

This sequence belongs to the DEAD box helicase family. Interacts with CspB when cells are transcriptionally active. May interact with RNA helicases CshA and DbpA (DeaD), may be a component of a possible RNA degradosome complex composed of rny, rnja, rnjb, pnp, pfkA and eno (although rnjA and rnjB's presence is unclear). Specifically interacts with pnp and rny.

The protein localises to the cytoplasm. The protein resides in the nucleoid. It catalyses the reaction ATP + H2O = ADP + phosphate + H(+). Its function is as follows. DEAD-box RNA helicase that plays a role in 70S ribosome assembly. May work in conjunction with the cold shock proteins to ensure proper initiation of transcription at low and optimal temperatures. This chain is DEAD-box ATP-dependent RNA helicase CshB, found in Bacillus subtilis (strain 168).